A 90-amino-acid polypeptide reads, in one-letter code: Small ribosomal subunit protein bS16 (90 aa).

The protein belongs to the bacterial ribosomal protein bS16 family.

The sequence is that of Small ribosomal subunit protein bS16 from Lactobacillus delbrueckii subsp. bulgaricus (strain ATCC 11842 / DSM 20081 / BCRC 10696 / JCM 1002 / NBRC 13953 / NCIMB 11778 / NCTC 12712 / WDCM 00102 / Lb 14).